Reading from the N-terminus, the 447-residue chain is Trigger factor (447 aa).

The PPIase FKBP-type domain occupies Gly174–Pro261.

It belongs to the FKBP-type PPIase family. Tig subfamily.

It is found in the cytoplasm. It catalyses the reaction [protein]-peptidylproline (omega=180) = [protein]-peptidylproline (omega=0). Involved in protein export. Acts as a chaperone by maintaining the newly synthesized protein in an open conformation. Functions as a peptidyl-prolyl cis-trans isomerase. The protein is Trigger factor of Synechococcus sp. (strain CC9902).